A 200-amino-acid polypeptide reads, in one-letter code: NAD(P)H dehydrogenase (quinone) (200 aa).

A Flavodoxin-like domain is found at 4–191; it reads VLVLYYSSYG…DIARYQGKHV (188 aa). FMN is bound by residues 10-15 and 79-81; these read SSYGHV and TRF. Residue Tyr-12 coordinates NAD(+). Trp-99 contacts substrate. FMN-binding positions include 114-120 and His-135; that span reads STGTQHG.

It belongs to the WrbA family. FMN serves as cofactor.

The enzyme catalyses a quinone + NADH + H(+) = a quinol + NAD(+). It carries out the reaction a quinone + NADPH + H(+) = a quinol + NADP(+). This is NAD(P)H dehydrogenase (quinone) from Burkholderia vietnamiensis (strain G4 / LMG 22486) (Burkholderia cepacia (strain R1808)).